The sequence spans 430 residues: Adenylosuccinate synthetase (430 aa).

Residues Gly12–Lys18 and Gly40–Thr42 contribute to the GTP site. The active-site Proton acceptor is Asp13. 2 residues coordinate Mg(2+): Asp13 and Gly40. IMP is bound by residues Asp13–Lys16, Asn38–His41, Thr128, Arg142, Gln223, Thr238, and Arg302. His41 acts as the Proton donor in catalysis. Position 298–304 (Thr298–Arg304) interacts with substrate. Residues Arg304, Ser330–Asp332, and Ser412–Gly414 each bind GTP.

The protein belongs to the adenylosuccinate synthetase family. In terms of assembly, homodimer. The cofactor is Mg(2+).

The protein localises to the cytoplasm. It catalyses the reaction IMP + L-aspartate + GTP = N(6)-(1,2-dicarboxyethyl)-AMP + GDP + phosphate + 2 H(+). Its pathway is purine metabolism; AMP biosynthesis via de novo pathway; AMP from IMP: step 1/2. Plays an important role in the de novo pathway of purine nucleotide biosynthesis. Catalyzes the first committed step in the biosynthesis of AMP from IMP. This Streptococcus pyogenes serotype M12 (strain MGAS9429) protein is Adenylosuccinate synthetase.